The chain runs to 443 residues: ATP-dependent protease ATPase subunit HslU (443 aa).

ATP contacts are provided by residues I20, 62–67 (GVGKTE), D255, E321, and R393.

This sequence belongs to the ClpX chaperone family. HslU subfamily. In terms of assembly, a double ring-shaped homohexamer of HslV is capped on each side by a ring-shaped HslU homohexamer. The assembly of the HslU/HslV complex is dependent on binding of ATP.

Its subcellular location is the cytoplasm. Its function is as follows. ATPase subunit of a proteasome-like degradation complex; this subunit has chaperone activity. The binding of ATP and its subsequent hydrolysis by HslU are essential for unfolding of protein substrates subsequently hydrolyzed by HslV. HslU recognizes the N-terminal part of its protein substrates and unfolds these before they are guided to HslV for hydrolysis. The polypeptide is ATP-dependent protease ATPase subunit HslU (Helicobacter pylori (strain HPAG1)).